Here is a 766-residue protein sequence, read N- to C-terminus: ABC-type oligopeptide transporter ABCB9 (766 aa).

The next 8 helical transmembrane spans lie at 7–27 (VVVT…IYVF), 47–67 (VLDL…ATIG), 84–104 (LVIT…LLLF), 116–136 (FWAL…LWWL), 185–205 (VAFL…ETFL), 225–245 (FSTA…AAGI), 319–339 (VFMF…FPII), and 416–436 (SGLT…HLVI). The region spanning 188–471 (LVAASFFLIV…VGSVYSGLMQ (284 aa)) is the ABC transmembrane type-1 domain. Residues 504–740 (VDFENVTFTY…GGLYAKLVQR (237 aa)) form the ABC transporter domain. 539 to 546 (GPSGSGKS) is an ATP binding site.

The protein belongs to the ABC transporter superfamily. ABCB family. MHC peptide exporter (TC 3.A.1.209) subfamily. Homodimer. Interacts (via TMD0 region) with LAMP1; this interaction strongly stabilizes ABCB9 and protects ABCB9 against lysosomal degradation. Interacts (via TMD0 region) with LAMP2 (isoform LAMP-2B). Interacts (via TMD0) with YIF1B; this interaction allows (but is not essential) the ER-to-Golgi trafficking and strongly depends on a salt bridge within TMD0. In terms of tissue distribution, highly expressed in testis, and at moderate levels in brain, spinal cord, and thyroid. Not expressed in monocytes but strongly expressed during differentiation of monocytes to dendritic cells and macrophages.

The protein resides in the lysosome membrane. It carries out the reaction a [oligopeptide](in) + ATP + H2O = a [oligopeptide](out) + ADP + phosphate + H(+). Transport activity is limited by threshold levels of luminal peptide. ATP hydrolysis is reduced in the presence of the spatial challenging 18-mer peptide by 50% and the branched 16-mer peptide by 75%. Transport rate of the longer peptides is strongly reduced. Its function is as follows. ATP-dependent low-affinity peptide transporter which translocates a broad spectrum of peptides from the cytosol to the lysosomal lumen for degradation. Displays a broad peptide length specificity from 6-mer up to at least 59-mer peptides with an optimum of 23-mers. Binds and transports smaller and larger peptides with the same affinity. Favors positively charged, aromatic or hydrophobic residues in the N- and C-terminal positions whereas negatively charged residues as well as asparagine and methionine are not favored. The chain is ABC-type oligopeptide transporter ABCB9 from Homo sapiens (Human).